A 456-amino-acid polypeptide reads, in one-letter code: Transcription factor bHLH62 (456 aa).

Residues 159-185 show a composition bias toward polar residues; it reads RTNSPFPINNEPPITTNEKMPRVSSSP. Residues 159 to 254 form a disordered region; it reads RTNSPFPINN…KTKSIDPYKD (96 aa). Basic and acidic residues predominate over residues 223 to 254; the sequence is KEIEEKEDSDPKRCKKSEENGDKTKSIDPYKD. Residues 264 to 314 form the bHLH domain; that stretch reads QATDSHSLAERVRREKISERMKLLQDLVPGCNKVTGKALMLDEIINYVQSL.

Homodimer. As to expression, expressed constitutively in roots, leaves, stems, and flowers.

It is found in the nucleus. The chain is Transcription factor bHLH62 (BHLH62) from Arabidopsis thaliana (Mouse-ear cress).